Here is a 575-residue protein sequence, read N- to C-terminus: Chaperonin CPN60-1, mitochondrial (575 aa).

The transit peptide at 1–32 directs the protein to the mitochondrion; it reads MHRFATGLASKARLARNGANQIASRSNWRRNY.

It belongs to the chaperonin (HSP60) family.

Its subcellular location is the mitochondrion. Implicated in mitochondrial protein import and macromolecular assembly. May facilitate the correct folding of imported proteins. May also prevent misfolding and promote the refolding and proper assembly of unfolded polypeptides generated under stress conditions in the mitochondrial matrix. The polypeptide is Chaperonin CPN60-1, mitochondrial (CPN60-1) (Cucurbita maxima (Pumpkin)).